A 92-amino-acid polypeptide reads, in one-letter code: MVVTTSDVVMCQMRHSDVQGVYRVYGSWMAENFQDQVSISNQIMSKFAPSMPHAVRSDVINNRLHNLYLHAHYFLICRHQLITHLNPHLHRN.

The protein belongs to the 'phage' integrase family.

The chain is Putative lambdoid prophage defective integrase (intG) from Escherichia coli O157:H7.